Here is a 673-residue protein sequence, read N- to C-terminus: Transcription initiation factor IIB (673 aa).

A TFIIB-type zinc finger spans residues 38-69 (EEIVCPICGSKEVVKDYERAEIVCAKCGCVIK). Zn(2+)-binding residues include Cys42, Cys45, Cys61, and Cys64. Residues 238–357 (ILGYIIAEGY…VIFLLLQIKE (120 aa)) form the DOD-type homing endonuclease domain. 2 tandem repeats follow at residues 490–573 (SELD…AREL) and 584–665 (DYVP…ELTE).

It belongs to the TFIIB family. Post-translationally, this protein undergoes a protein self splicing that involves a post-translational excision of the intervening region (intein) followed by peptide ligation.

In terms of biological role, stabilizes TBP binding to an archaeal box-A promoter. Also responsible for recruiting RNA polymerase II to the pre-initiation complex (DNA-TBP-TFIIB). The protein is Transcription initiation factor IIB (tfb) of Methanocaldococcus jannaschii (strain ATCC 43067 / DSM 2661 / JAL-1 / JCM 10045 / NBRC 100440) (Methanococcus jannaschii).